The chain runs to 389 residues: Succinate--CoA ligase [ADP-forming] subunit beta (389 aa).

Residues 9-244 form the ATP-grasp domain; it reads KEIFRSMGVA…LDEEDPKEIE (236 aa). ATP is bound by residues Lys-46, 53-55, Glu-99, Cys-102, and Glu-107; that span reads GRG. Positions 199 and 213 each coordinate Mg(2+). Substrate contacts are provided by residues Asn-264 and 321-323; that span reads GIM.

Belongs to the succinate/malate CoA ligase beta subunit family. In terms of assembly, heterotetramer of two alpha and two beta subunits. It depends on Mg(2+) as a cofactor.

The catalysed reaction is succinate + ATP + CoA = succinyl-CoA + ADP + phosphate. The enzyme catalyses GTP + succinate + CoA = succinyl-CoA + GDP + phosphate. The protein operates within carbohydrate metabolism; tricarboxylic acid cycle; succinate from succinyl-CoA (ligase route): step 1/1. Functionally, succinyl-CoA synthetase functions in the citric acid cycle (TCA), coupling the hydrolysis of succinyl-CoA to the synthesis of either ATP or GTP and thus represents the only step of substrate-level phosphorylation in the TCA. The beta subunit provides nucleotide specificity of the enzyme and binds the substrate succinate, while the binding sites for coenzyme A and phosphate are found in the alpha subunit. The sequence is that of Succinate--CoA ligase [ADP-forming] subunit beta from Macrococcus caseolyticus (strain JCSC5402) (Macrococcoides caseolyticum).